Here is a 274-residue protein sequence, read N- to C-terminus: Diaminopimelate epimerase (274 aa).

Residues Asn-11, Gln-44, and Asn-64 each contribute to the substrate site. Cys-73 functions as the Proton donor in the catalytic mechanism. Substrate contacts are provided by residues 74–75 (GN), Asn-157, Asn-190, and 208–209 (ER). Cys-217 (proton acceptor) is an active-site residue. Residue 218 to 219 (GS) participates in substrate binding.

The protein belongs to the diaminopimelate epimerase family. In terms of assembly, homodimer.

It localises to the cytoplasm. The catalysed reaction is (2S,6S)-2,6-diaminopimelate = meso-2,6-diaminopimelate. It functions in the pathway amino-acid biosynthesis; L-lysine biosynthesis via DAP pathway; DL-2,6-diaminopimelate from LL-2,6-diaminopimelate: step 1/1. Its function is as follows. Catalyzes the stereoinversion of LL-2,6-diaminopimelate (L,L-DAP) to meso-diaminopimelate (meso-DAP), a precursor of L-lysine and an essential component of the bacterial peptidoglycan. The sequence is that of Diaminopimelate epimerase from Shigella flexneri serotype 5b (strain 8401).